A 37-amino-acid chain; its full sequence is Large ribosomal subunit protein bL36 (37 aa).

This sequence belongs to the bacterial ribosomal protein bL36 family.

The polypeptide is Large ribosomal subunit protein bL36 (Halorhodospira halophila (strain DSM 244 / SL1) (Ectothiorhodospira halophila (strain DSM 244 / SL1))).